The sequence spans 306 residues: Methionyl-tRNA formyltransferase (306 aa).

108-111 (SLLP) contributes to the (6S)-5,6,7,8-tetrahydrofolate binding site.

Belongs to the Fmt family.

The catalysed reaction is L-methionyl-tRNA(fMet) + (6R)-10-formyltetrahydrofolate = N-formyl-L-methionyl-tRNA(fMet) + (6S)-5,6,7,8-tetrahydrofolate + H(+). Its function is as follows. Attaches a formyl group to the free amino group of methionyl-tRNA(fMet). The formyl group appears to play a dual role in the initiator identity of N-formylmethionyl-tRNA by promoting its recognition by IF2 and preventing the misappropriation of this tRNA by the elongation apparatus. The protein is Methionyl-tRNA formyltransferase of Arthrobacter sp. (strain FB24).